Reading from the N-terminus, the 331-residue chain is MEFHCKELDFSLKKVESDEKVKRKPGRPRKHNVRPVVKDVPIGNDFDKATITTKTFTIKVENFDPDIDIWRNQISVSNVQHNDLECRCKDKIFPYTKPHKPGDIVEEYVFSKKNTKNIEKKENVFKNCFTVVILDQSLKPTTIKICKKGSFQLTGCLSMESGEFCVLSLITNLQKKNPQWIPSLIDMTIKPVMTNVKFTIGYKISIVKALNFFENRKDIHEFFSYKLRVNPAINIKELLTEKDLENVPVRIVTYVNVNNKIYNRTSQEITLLNHIQTLSLKEKQKHFKEKHTTLLLFRSGSVILSGIHENVMKKTFESFQKVTSDYKSYLT.

Belongs to the IIV-6 335L family.

This is an uncharacterized protein from Invertebrate iridescent virus 6 (IIV-6).